A 262-amino-acid chain; its full sequence is Thrombin-like enzyme calobin-1 (262 aa).

Positions M1–A18 are cleaved as a signal peptide. Residues Q19–L24 constitute a propeptide that is removed on maturation. Residues V25 to A253 enclose the Peptidase S1 domain. 6 disulfide bridges follow: C31/C165, C52/C68, C100/C260, C144/C214, C176/C193, and C204/C229. The Charge relay system role is filled by H67. N105 is a glycosylation site (N-linked (GlcNAc...) asparagine). D112 functions as the Charge relay system in the catalytic mechanism. S208 (charge relay system) is an active-site residue.

The protein belongs to the peptidase S1 family. Snake venom subfamily. In terms of assembly, monomer. In terms of processing, N-glycosylated. In terms of tissue distribution, expressed by the venom gland.

It localises to the secreted. Its activity is regulated as follows. Strongly inhibited by PMSF, and moderately by benzamidine and soybean trypsin inhibitor. In terms of biological role, thrombin-like snake venom serine protease. Has a coagulant activity. Acts on alpha-chains of fibrinogen (FGA) generating fibrinopeptide A. In Gloydius ussuriensis (Ussuri mamushi), this protein is Thrombin-like enzyme calobin-1.